A 448-amino-acid polypeptide reads, in one-letter code: tRNA-2-methylthio-N(6)-dimethylallyladenosine synthase (448 aa).

Residues 2–119 form the MTTase N-terminal domain; the sequence is KKLYIKTFGC…LSDLIAQRRK (118 aa). [4Fe-4S] cluster contacts are provided by C11, C48, C82, C156, C160, and C163. One can recognise a Radical SAM core domain in the interval 142–375; that stretch reads RQTRGSAYVS…LALIEGQSNQ (234 aa). Residues 378–444 form the TRAM domain; the sequence is QKMLGKTERV…NYTLRGELVE (67 aa).

Belongs to the methylthiotransferase family. MiaB subfamily. As to quaternary structure, monomer. The cofactor is [4Fe-4S] cluster.

It is found in the cytoplasm. The catalysed reaction is N(6)-dimethylallyladenosine(37) in tRNA + (sulfur carrier)-SH + AH2 + 2 S-adenosyl-L-methionine = 2-methylsulfanyl-N(6)-dimethylallyladenosine(37) in tRNA + (sulfur carrier)-H + 5'-deoxyadenosine + L-methionine + A + S-adenosyl-L-homocysteine + 2 H(+). Functionally, catalyzes the methylthiolation of N6-(dimethylallyl)adenosine (i(6)A), leading to the formation of 2-methylthio-N6-(dimethylallyl)adenosine (ms(2)i(6)A) at position 37 in tRNAs that read codons beginning with uridine. In Polynucleobacter asymbioticus (strain DSM 18221 / CIP 109841 / QLW-P1DMWA-1) (Polynucleobacter necessarius subsp. asymbioticus), this protein is tRNA-2-methylthio-N(6)-dimethylallyladenosine synthase.